A 631-amino-acid polypeptide reads, in one-letter code: Nucleoside triphosphatase I (631 aa).

In terms of domain architecture, Helicase ATP-binding spans 42 to 204; sequence FLGLDSMHSL…TMLVNLLRPG (163 aa). An ATP-binding site is contributed by 55-62; sequence HETGVGKT. A DEXH box motif is present at residues 141–144; that stretch reads DECH. Residues 367 to 532 enclose the Helicase C-terminal domain; it reads KFIDVCLGIL…EFVQLFRVFK (166 aa).

The protein belongs to the helicase family. NPH I subfamily. Monomer.

It carries out the reaction a ribonucleoside 5'-triphosphate + H2O = a ribonucleoside 5'-diphosphate + phosphate + H(+). Its function is as follows. Serves two roles in transcription; it acts in concert with viral termination factor/capping enzyme to catalyze release of UUUUUNU-containing nascent RNA from the elongation complex, and it acts by itself as a polymerase elongation factor to facilitate readthrough of intrinsic pause sites. The protein is Nucleoside triphosphatase I (NPH1) of Homo sapiens (Human).